Reading from the N-terminus, the 25-residue chain is Large ribosomal subunit protein uL29 (25 aa).

It belongs to the universal ribosomal protein uL29 family.

In Brevundimonas vesicularis (Pseudomonas vesicularis), this protein is Large ribosomal subunit protein uL29 (rpmC).